The following is a 425-amino-acid chain: Palmitoyltransferase ZDHHC23 (425 aa).

The Cytoplasmic portion of the chain corresponds to 1–81 (MKPVKKKKTE…RIPWLRGAKK (81 aa)). The chain crosses the membrane as a helical span at residues 82 to 99 (VNISIVPPLVLLPVFLHV). The Lumenal portion of the chain corresponds to 100-102 (ASW). Residues 103–125 (HFLLGVVVLTSLPMLALWYYYLT) traverse the membrane as a helical segment. The Cytoplasmic segment spans residues 126–130 (HRRKE). A helical transmembrane segment spans residues 131–151 (QTLFFLSLGLFSLGYMYYVFL). The Lumenal segment spans residues 152–159 (REVVPQGR). A helical membrane pass occupies residues 160-180 (VGPTQLALLTCGLLLILLALY). At 181–292 (RAKKNPGYLS…NSCVGESNHQ (112 aa)) the chain is on the cytoplasmic side. Residues 249–299 (DWCAKCQLVRPARAWHCRICGICVRRMDHHCVWINSCVGESNHQAFILALS) enclose the DHHC domain. The active-site S-palmitoyl cysteine intermediate is the cysteine 279. Residues 293–313 (AFILALSIFLLTSVYGISLTL) traverse the membrane as a helical segment. At 314-343 (NTICRDRSLFTALFYCPGVYANYSSALSFT) the chain is on the lumenal side. Residues 344–364 (CVWYSVIITAGMAYIFLIQLI) form a helical membrane-spanning segment. Residues 365–425 (NISYNVTERE…TVHTPAEDIV (61 aa)) lie on the Cytoplasmic side of the membrane. The segment at 422–425 (EDIV) is interaction with NOS1.

Belongs to the DHHC palmitoyltransferase family. As to quaternary structure, interacts with NOS1. Expressed in the brain.

It localises to the golgi apparatus membrane. The protein localises to the golgi apparatus. Its subcellular location is the trans-Golgi network membrane. The catalysed reaction is L-cysteinyl-[protein] + hexadecanoyl-CoA = S-hexadecanoyl-L-cysteinyl-[protein] + CoA. Its function is as follows. Palmitoyltransferase that could catalyze the addition of palmitate onto various protein substrates and be involved in a variety of cellular processes. Palmitoyltransferase that mediates palmitoylation of KCNMA1, regulating localization of KCNMA1 to the plasma membrane. May be involved in NOS1 regulation and targeting to the synaptic membrane. This chain is Palmitoyltransferase ZDHHC23, found in Mus musculus (Mouse).